We begin with the raw amino-acid sequence, 336 residues long: Coproporphyrin III ferrochelatase (336 aa).

Fe-coproporphyrin III is bound by residues Ser52 and Tyr116. Residues His172 and Glu255 each contribute to the Fe(2+) site.

This sequence belongs to the ferrochelatase family.

Its subcellular location is the cytoplasm. The enzyme catalyses Fe-coproporphyrin III + 2 H(+) = coproporphyrin III + Fe(2+). Its pathway is porphyrin-containing compound metabolism; protoheme biosynthesis. In terms of biological role, involved in coproporphyrin-dependent heme b biosynthesis. Catalyzes the insertion of ferrous iron into coproporphyrin III to form Fe-coproporphyrin III. The protein is Coproporphyrin III ferrochelatase of Mycobacterium avium (strain 104).